We begin with the raw amino-acid sequence, 332 residues long: Geranylgeranyl pyrophosphate synthase dpasD (332 aa).

3 residues coordinate isopentenyl diphosphate: Lys-55, Arg-58, and His-87. 2 residues coordinate Mg(2+): Asp-94 and Asp-98. Position 103 (Arg-103) interacts with dimethylallyl diphosphate. Isopentenyl diphosphate is bound at residue Arg-104. Dimethylallyl diphosphate is bound by residues Lys-181, Thr-182, and Gln-215. A Mg(2+)-binding site is contributed by Asp-218. 3 residues coordinate dimethylallyl diphosphate: Asn-222, Lys-232, and Lys-242.

Belongs to the FPP/GGPP synthase family. Mg(2+) is required as a cofactor.

It carries out the reaction isopentenyl diphosphate + dimethylallyl diphosphate = (2E)-geranyl diphosphate + diphosphate. The catalysed reaction is isopentenyl diphosphate + (2E)-geranyl diphosphate = (2E,6E)-farnesyl diphosphate + diphosphate. The enzyme catalyses isopentenyl diphosphate + (2E,6E)-farnesyl diphosphate = (2E,6E,10E)-geranylgeranyl diphosphate + diphosphate. It functions in the pathway secondary metabolite biosynthesis; terpenoid biosynthesis. In terms of biological role, geranylgeranyl pyrophosphate synthase; part of the gene cluster that mediates the biosynthesis of the diterpenoid pyrones subglutinols A and B. The first step of the pathway is the synthesis of the alpha-pyrone moiety by the polyketide synthase dpasA via condensation of one acetyl-CoA starter unit with 3 malonyl-CoA units and 2 methylations. The alpha-pyrone is then combined with geranylgeranyl pyrophosphate (GGPP) formed by the GGPP synthase dpasD through the action of the prenyltransferase dpasC to yield a linear alpha-pyrone diterpenoid. Subsequent steps in the diterpenoid pyrone biosynthetic pathway involve the decalin core formation, which is initiated by the epoxidation of the C10-C11 olefin by the FAD-dependent oxidoreductase dpasE, and is followed by a cyclization cascade catalyzed by the terpene cyclase dpasB. The FAD-linked oxidoreductase dpasF is then involved in tetrahydrofuran (THF) ring formation at the C5 unit to complete the formation of subglutinols A and B. DpasF also possesses an additional catalytic ability of multi-step oxidations to generate a new DDP analog with an enone system at the C5 named FDDP A. The polypeptide is Geranylgeranyl pyrophosphate synthase dpasD (Apiospora sacchari (Arthrinium sacchari)).